The following is a 305-amino-acid chain: Homoserine O-acetyltransferase (305 aa).

Cys142 (acyl-thioester intermediate) is an active-site residue. Residues Lys163 and Ser192 each coordinate substrate. His235 acts as the Proton acceptor in catalysis. Glu237 is a catalytic residue. Arg249 contributes to the substrate binding site.

The protein belongs to the MetA family.

It localises to the cytoplasm. The catalysed reaction is L-homoserine + acetyl-CoA = O-acetyl-L-homoserine + CoA. The protein operates within amino-acid biosynthesis; L-methionine biosynthesis via de novo pathway; O-acetyl-L-homoserine from L-homoserine: step 1/1. Its function is as follows. Transfers an acetyl group from acetyl-CoA to L-homoserine, forming acetyl-L-homoserine. In Bacteroides fragilis (strain YCH46), this protein is Homoserine O-acetyltransferase.